Reading from the N-terminus, the 591-residue chain is Transcription factor COE1-A (591 aa).

The tract at residues 63–66 (RKSN) is interaction with DNA. A C5-type zinc finger spans residues 151 to 170 (CRVLLTHEIMCSRCCDKKSC). Interaction with DNA regions lie at residues 197 to 204 (NCLKNAGN) and 236 to 239 (NNSK). The IPT/TIG domain occupies 262–344 (PCIKAISPSE…CKGTPGRFIY (83 aa)). Residues 454-466 (ANQGFSRNTSSVS) are compositionally biased toward polar residues. The segment at 454-484 (ANQGFSRNTSSVSPHGYVPSTTPQQSSYSTV) is disordered. The segment covering 471 to 484 (VPSTTPQQSSYSTV) has biased composition (low complexity).

This sequence belongs to the COE family. As to quaternary structure, forms either a homodimer or a heterodimer with a related family member. In terms of tissue distribution, detected in B cells.

It is found in the nucleus. Transcriptional activator. This chain is Transcription factor COE1-A, found in Danio rerio (Zebrafish).